The primary structure comprises 629 residues: Probable indole-3-acetic acid-amido synthetase GH3.4 (629 aa).

The protein belongs to the IAA-amido conjugating enzyme family. In terms of tissue distribution, expressed in flowers.

Functionally, may catalyze the synthesis of indole-3-acetic acid (IAA)-amino acid conjugates, providing a mechanism for the plant to cope with the presence of excess auxin. This is Probable indole-3-acetic acid-amido synthetase GH3.4 (GH3.4) from Oryza sativa subsp. japonica (Rice).